The chain runs to 384 residues: Alanine racemase (384 aa).

The Proton acceptor; specific for D-alanine role is filled by K39. N6-(pyridoxal phosphate)lysine is present on K39. A substrate-binding site is contributed by R136. The Proton acceptor; specific for L-alanine role is filled by Y265. A substrate-binding site is contributed by M312.

This sequence belongs to the alanine racemase family. It depends on pyridoxal 5'-phosphate as a cofactor.

The enzyme catalyses L-alanine = D-alanine. It participates in amino-acid biosynthesis; D-alanine biosynthesis; D-alanine from L-alanine: step 1/1. Functionally, catalyzes the interconversion of L-alanine and D-alanine. May also act on other amino acids. This is Alanine racemase (alr) from Geobacillus kaustophilus (strain HTA426).